The primary structure comprises 615 residues: Isocitrate dehydrogenase kinase/phosphatase (615 aa).

ATP-binding positions include 328 to 334 (APGIRGL) and Lys349. Asp384 is a catalytic residue. Residues 595 to 615 (AEPPATPPVKQPDAGPARRVA) form a disordered region.

The protein belongs to the AceK family.

The protein resides in the cytoplasm. The catalysed reaction is L-seryl-[isocitrate dehydrogenase] + ATP = O-phospho-L-seryl-[isocitrate dehydrogenase] + ADP + H(+). In terms of biological role, bifunctional enzyme which can phosphorylate or dephosphorylate isocitrate dehydrogenase (IDH) on a specific serine residue. This is a regulatory mechanism which enables bacteria to bypass the Krebs cycle via the glyoxylate shunt in response to the source of carbon. When bacteria are grown on glucose, IDH is fully active and unphosphorylated, but when grown on acetate or ethanol, the activity of IDH declines drastically concomitant with its phosphorylation. The protein is Isocitrate dehydrogenase kinase/phosphatase of Cupriavidus taiwanensis (strain DSM 17343 / BCRC 17206 / CCUG 44338 / CIP 107171 / LMG 19424 / R1) (Ralstonia taiwanensis (strain LMG 19424)).